Here is a 210-residue protein sequence, read N- to C-terminus: Thiamine-phosphate synthase (210 aa).

4-amino-2-methyl-5-(diphosphooxymethyl)pyrimidine is bound by residues 43–47 (QLREK) and N75. Positions 76 and 95 each coordinate Mg(2+). S114 provides a ligand contact to 4-amino-2-methyl-5-(diphosphooxymethyl)pyrimidine. 140 to 142 (TST) is a 2-[(2R,5Z)-2-carboxy-4-methylthiazol-5(2H)-ylidene]ethyl phosphate binding site. K143 contributes to the 4-amino-2-methyl-5-(diphosphooxymethyl)pyrimidine binding site. 2-[(2R,5Z)-2-carboxy-4-methylthiazol-5(2H)-ylidene]ethyl phosphate contacts are provided by residues G170 and 190-191 (IS).

It belongs to the thiamine-phosphate synthase family. Requires Mg(2+) as cofactor.

It carries out the reaction 2-[(2R,5Z)-2-carboxy-4-methylthiazol-5(2H)-ylidene]ethyl phosphate + 4-amino-2-methyl-5-(diphosphooxymethyl)pyrimidine + 2 H(+) = thiamine phosphate + CO2 + diphosphate. The enzyme catalyses 2-(2-carboxy-4-methylthiazol-5-yl)ethyl phosphate + 4-amino-2-methyl-5-(diphosphooxymethyl)pyrimidine + 2 H(+) = thiamine phosphate + CO2 + diphosphate. It catalyses the reaction 4-methyl-5-(2-phosphooxyethyl)-thiazole + 4-amino-2-methyl-5-(diphosphooxymethyl)pyrimidine + H(+) = thiamine phosphate + diphosphate. It functions in the pathway cofactor biosynthesis; thiamine diphosphate biosynthesis; thiamine phosphate from 4-amino-2-methyl-5-diphosphomethylpyrimidine and 4-methyl-5-(2-phosphoethyl)-thiazole: step 1/1. Condenses 4-methyl-5-(beta-hydroxyethyl)thiazole monophosphate (THZ-P) and 2-methyl-4-amino-5-hydroxymethyl pyrimidine pyrophosphate (HMP-PP) to form thiamine monophosphate (TMP). The chain is Thiamine-phosphate synthase from Clostridioides difficile (strain 630) (Peptoclostridium difficile).